Reading from the N-terminus, the 89-residue chain is Acylphosphatase (89 aa).

In terms of domain architecture, Acylphosphatase-like spans 3-89 (RFTARVAGLV…QSDLTDFRRK (87 aa)). Active-site residues include R18 and N36.

Belongs to the acylphosphatase family.

The catalysed reaction is an acyl phosphate + H2O = a carboxylate + phosphate + H(+). The protein is Acylphosphatase (acyP) of Frankia casuarinae (strain DSM 45818 / CECT 9043 / HFP020203 / CcI3).